The chain runs to 299 residues: GTPase Era (299 aa).

An Era-type G domain is found at 5 to 175 (RSGFVCLVGR…IDVLAAALPP (171 aa)). The segment at 13-20 (GRPNTGKS) is G1. 13-20 (GRPNTGKS) contributes to the GTP binding site. A G2 region spans residues 39–43 (QTTRH). A G3 region spans residues 60–63 (DTPG). Residues 60-64 (DTPGL) and 124-127 (TKID) each bind GTP. The tract at residues 124-127 (TKID) is G4. Residues 154 to 156 (VSA) are G5. One can recognise a KH type-2 domain in the interval 206–285 (VRDELPHSLA…YLDLRVKVAK (80 aa)).

Belongs to the TRAFAC class TrmE-Era-EngA-EngB-Septin-like GTPase superfamily. Era GTPase family. Monomer.

It is found in the cell envelope. It localises to the secreted. The protein localises to the cell wall. Functionally, exhibits GTPase activity. Binds RNA but is probably not involved in ribosome assembly in mycobacteria. In Mycolicibacterium paratuberculosis (strain ATCC BAA-968 / K-10) (Mycobacterium paratuberculosis), this protein is GTPase Era.